Reading from the N-terminus, the 212-residue chain is Large ribosomal subunit protein uL3 (212 aa).

Q153 is modified (N5-methylglutamine).

The protein belongs to the universal ribosomal protein uL3 family. Part of the 50S ribosomal subunit. Forms a cluster with proteins L14 and L19. Methylated by PrmB.

In terms of biological role, one of the primary rRNA binding proteins, it binds directly near the 3'-end of the 23S rRNA, where it nucleates assembly of the 50S subunit. The chain is Large ribosomal subunit protein uL3 from Idiomarina loihiensis (strain ATCC BAA-735 / DSM 15497 / L2-TR).